A 160-amino-acid chain; its full sequence is MTRGLVFFVSTACGILADQLSKFIITANLATGTSIPESGFFQIVHVHNTGAAFSIFQGHIEWLIAASVLGVILAMTAFFIRKKLPFLDTRPGLIALGVILAGTVGNLIDRVRLGYVTDFIRVGDFPTFNIADSCLTVGVIGLLLLYIVSSHVSGDTSENV.

3 consecutive transmembrane segments (helical) span residues 5 to 25, 60 to 80, and 84 to 104; these read LVFF…KFII, IEWL…AFFI, and LPFL…AGTV. Active-site residues include D118 and D132. A helical transmembrane segment spans residues 128 to 148; it reads FNIADSCLTVGVIGLLLLYIV.

This sequence belongs to the peptidase A8 family.

It is found in the cell membrane. It catalyses the reaction Release of signal peptides from bacterial membrane prolipoproteins. Hydrolyzes -Xaa-Yaa-Zaa-|-(S,diacylglyceryl)Cys-, in which Xaa is hydrophobic (preferably Leu), and Yaa (Ala or Ser) and Zaa (Gly or Ala) have small, neutral side chains.. It functions in the pathway protein modification; lipoprotein biosynthesis (signal peptide cleavage). Functionally, this protein specifically catalyzes the removal of signal peptides from prolipoproteins. This is Lipoprotein signal peptidase from Dehalococcoides mccartyi (strain ATCC BAA-2100 / JCM 16839 / KCTC 5957 / BAV1).